We begin with the raw amino-acid sequence, 498 residues long: Probable cytosol aminopeptidase (498 aa).

The Mn(2+) site is built by Lys-264 and Asp-269. Residue Lys-276 is part of the active site. Asp-287, Asp-346, and Glu-348 together coordinate Mn(2+). The active site involves Arg-350.

Belongs to the peptidase M17 family. Requires Mn(2+) as cofactor.

The protein resides in the cytoplasm. It catalyses the reaction Release of an N-terminal amino acid, Xaa-|-Yaa-, in which Xaa is preferably Leu, but may be other amino acids including Pro although not Arg or Lys, and Yaa may be Pro. Amino acid amides and methyl esters are also readily hydrolyzed, but rates on arylamides are exceedingly low.. The catalysed reaction is Release of an N-terminal amino acid, preferentially leucine, but not glutamic or aspartic acids.. Functionally, presumably involved in the processing and regular turnover of intracellular proteins. Catalyzes the removal of unsubstituted N-terminal amino acids from various peptides. This is Probable cytosol aminopeptidase from Rhizobium rhizogenes (strain K84 / ATCC BAA-868) (Agrobacterium radiobacter).